We begin with the raw amino-acid sequence, 2499 residues long: Probable polyketide synthase 22 (2499 aa).

One can recognise a Ketosynthase family 3 (KS3) domain in the interval 11–430 (DNQVAIVGLG…GSNACVLLSE (420 aa)). Residues Cys-177, His-316, and His-354 each act as for beta-ketoacyl synthase activity in the active site. Residues 623-656 (GITPSIIVGHSLGEVASAFCSGMIDLETACFVIY) form an acyl/malonyl transferases region. The active-site For acyl/malonyl transferase activity is Ser-633. Residues 922-1044 (APINQLGNKN…SRILMKSLDV (123 aa)) are N-terminal hotdog fold. The region spanning 922–1209 (APINQLGNKN…IASTLSTKSE (288 aa)) is the PKS/mFAS DH domain. Residue His-956 is the Proton acceptor; for dehydratase activity of the active site. Residues 1059–1209 (NWSTLKREQL…IASTLSTKSE (151 aa)) form a C-terminal hotdog fold region. The Proton donor; for dehydratase activity role is filled by Asp-1121. In terms of domain architecture, Carrier spans 2414 to 2491 (EKEFSIRQDI…QIINIVTTKV (78 aa)). Ser-2451 bears the O-(pantetheine 4'-phosphoryl)serine mark.

The cofactor is pantetheine 4'-phosphate.

Its function is as follows. Probable polyketide synthase. The polypeptide is Probable polyketide synthase 22 (pks22) (Dictyostelium discoideum (Social amoeba)).